The chain runs to 665 residues: Phosphatidylinositol-3-phosphate phosphatase MTMR1 (665 aa).

Position 1 is an N-acetylmethionine (Met-1). The segment covering 1–11 (MDRPAAAAAAG) has biased composition (low complexity). Residues 1-51 (MDRPAAAAAAGCEGGGGPNPGPAGGRRPPRAAGGATAGSRQPSVETLDSPT) form a disordered region. Positions 12 to 24 (CEGGGGPNPGPAG) are enriched in gly residues. Residues 39–51 (SRQPSVETLDSPT) are compositionally biased toward polar residues. 2 positions are modified to phosphoserine: Ser-43 and Ser-49. A GRAM domain is found at 90 to 161 (NKLAQMEEAP…GVISRVEKIG (72 aa)). One can recognise a Myotubularin phosphatase domain in the interval 226-601 (GWKVYDPVSE…SHLELWVNYY (376 aa)). Asn-351, Asn-376, and Ile-377 together coordinate a 1,2-diacyl-sn-glycero-3-phospho-(1D-myo-inositol-3-phosphate). Residue Cys-438 is the Phosphocysteine intermediate of the active site. Ser-439, Asp-440, Gly-441, Trp-442, Asp-443, Arg-444, and Arg-484 together coordinate a 1,2-diacyl-sn-glycero-3-phospho-(1D-myo-inositol-3-phosphate). Ser-439 lines the phosphate pocket. Residues Gly-441, Trp-442, Asp-443, and Arg-444 each coordinate phosphate. The interval 608–665 (MRPQMPIHQNLKELLAVRAELQKRVEGLQREVATRAVSSSSERGSSPSHSATSVHTSV) is required for dimerization. Residues 642-665 (RAVSSSSERGSSPSHSATSVHTSV) form a disordered region. Over residues 645–657 (SSSSERGSSPSHS) the composition is skewed to low complexity.

It belongs to the protein-tyrosine phosphatase family. Non-receptor class myotubularin subfamily. As to quaternary structure, homodimer.

The protein localises to the cell membrane. Its subcellular location is the cytoplasm. The catalysed reaction is a 1,2-diacyl-sn-glycero-3-phospho-(1D-myo-inositol-3-phosphate) + H2O = a 1,2-diacyl-sn-glycero-3-phospho-(1D-myo-inositol) + phosphate. It catalyses the reaction 1,2-dioctanoyl-sn-glycero-3-phospho-(1-D-myo-inositol-3-phosphate) + H2O = 1,2-dioctanoyl-sn-glycero-3-phospho-(1D-myo-inositol) + phosphate. The enzyme catalyses a 1,2-diacyl-sn-glycero-3-phospho-(1D-myo-inositol-3,5-bisphosphate) + H2O = a 1,2-diacyl-sn-glycero-3-phospho-(1D-myo-inositol-5-phosphate) + phosphate. In terms of biological role, lipid phosphatase that specifically dephosphorylates the D-3 position of phosphatidylinositol 3-phosphate, generating phosphatidylinositol. Could also dephosphorylate phosphatidylinositol 3,5-bisphosphate to produce phosphatidylinositol 5-phosphate. The chain is Phosphatidylinositol-3-phosphate phosphatase MTMR1 from Homo sapiens (Human).